The chain runs to 1295 residues: Phosphoribosylformylglycinamidine synthase (1295 aa).

The disordered stretch occupies residues 305-327; the sequence is WPGAATGSGGEIRDEGATGRGAK. ATP contacts are provided by residues 307–318 and Ala-678; that span reads GAATGSGGEIRD. Positions 718, 722, and 884 each coordinate Mg(2+). Ser-886 is a binding site for ATP. Residues 1042–1295 enclose the Glutamine amidotransferase type-1 domain; the sequence is VAVLREQGVN…IFRNARKQLG (254 aa). Cys-1135 functions as the Nucleophile in the catalytic mechanism. Catalysis depends on residues His-1260 and Glu-1262.

In the N-terminal section; belongs to the FGAMS family. Monomer.

It is found in the cytoplasm. The enzyme catalyses N(2)-formyl-N(1)-(5-phospho-beta-D-ribosyl)glycinamide + L-glutamine + ATP + H2O = 2-formamido-N(1)-(5-O-phospho-beta-D-ribosyl)acetamidine + L-glutamate + ADP + phosphate + H(+). The protein operates within purine metabolism; IMP biosynthesis via de novo pathway; 5-amino-1-(5-phospho-D-ribosyl)imidazole from N(2)-formyl-N(1)-(5-phospho-D-ribosyl)glycinamide: step 1/2. Phosphoribosylformylglycinamidine synthase involved in the purines biosynthetic pathway. Catalyzes the ATP-dependent conversion of formylglycinamide ribonucleotide (FGAR) and glutamine to yield formylglycinamidine ribonucleotide (FGAM) and glutamate. The sequence is that of Phosphoribosylformylglycinamidine synthase from Shigella sonnei (strain Ss046).